Here is a 206-residue protein sequence, read N- to C-terminus: MITVALPKGRIAEETLDRFEKIFGERFVFEDRKLILERGEFKFLLVRNQDVPTYVLHQAADIGIVGLDVLEEQESDLIRLLDLGIGRCKVVIGSPMGSEIDYSKPQIKIATKMTNIAKKHFAKQALAVDLIKLYGSIELAPLVGLADAIVDIVETGTTMKQNHLKIDEVIMESSAYMVANRNSFYEKKDKILELQRQFSKLKEVRE.

Belongs to the ATP phosphoribosyltransferase family. Short subfamily. In terms of assembly, heteromultimer composed of HisG and HisZ subunits.

The protein resides in the cytoplasm. The enzyme catalyses 1-(5-phospho-beta-D-ribosyl)-ATP + diphosphate = 5-phospho-alpha-D-ribose 1-diphosphate + ATP. The protein operates within amino-acid biosynthesis; L-histidine biosynthesis; L-histidine from 5-phospho-alpha-D-ribose 1-diphosphate: step 1/9. In terms of biological role, catalyzes the condensation of ATP and 5-phosphoribose 1-diphosphate to form N'-(5'-phosphoribosyl)-ATP (PR-ATP). Has a crucial role in the pathway because the rate of histidine biosynthesis seems to be controlled primarily by regulation of HisG enzymatic activity. The sequence is that of ATP phosphoribosyltransferase from Wolinella succinogenes (strain ATCC 29543 / DSM 1740 / CCUG 13145 / JCM 31913 / LMG 7466 / NCTC 11488 / FDC 602W) (Vibrio succinogenes).